Here is a 286-residue protein sequence, read N- to C-terminus: Pantothenate synthetase (286 aa).

Residue 30–37 (MGNLHSGH) participates in ATP binding. The active-site Proton donor is the His-37. (R)-pantoate is bound at residue Gln-61. Gln-61 is a binding site for beta-alanine. Residue 149–152 (GQKD) coordinates ATP. Gln-155 lines the (R)-pantoate pocket. Residues Val-178 and 186-189 (LSSR) contribute to the ATP site.

Belongs to the pantothenate synthetase family. As to quaternary structure, homodimer.

The protein localises to the cytoplasm. It catalyses the reaction (R)-pantoate + beta-alanine + ATP = (R)-pantothenate + AMP + diphosphate + H(+). It functions in the pathway cofactor biosynthesis; (R)-pantothenate biosynthesis; (R)-pantothenate from (R)-pantoate and beta-alanine: step 1/1. In terms of biological role, catalyzes the condensation of pantoate with beta-alanine in an ATP-dependent reaction via a pantoyl-adenylate intermediate. This Pseudomonas fluorescens (strain ATCC BAA-477 / NRRL B-23932 / Pf-5) protein is Pantothenate synthetase.